Here is a 426-residue protein sequence, read N- to C-terminus: Histidine--tRNA ligase (426 aa).

This sequence belongs to the class-II aminoacyl-tRNA synthetase family. In terms of assembly, homodimer.

The protein localises to the cytoplasm. The enzyme catalyses tRNA(His) + L-histidine + ATP = L-histidyl-tRNA(His) + AMP + diphosphate + H(+). This is Histidine--tRNA ligase from Chlorobium phaeovibrioides (strain DSM 265 / 1930) (Prosthecochloris vibrioformis (strain DSM 265)).